Reading from the N-terminus, the 385-residue chain is MKKVEILKTSRPSSAGGAARPSTASPTHGAPKIAIKTRPVADDVAPTAATVIEPSQKAMKESVRFLTDFGEISDAISDLLTSSPNFNVISAIGPQGAGKSTLLSMLAGNNSRQMYREYVFRPVSREANEQSRHQTIQIDIYIVNHQIFLDCQPMYSFSIMEGLPKVRGGRFDDSTAMSDTLRLTAFLLYVSHTVLVVSETHYDKVIIDTLRVAEQIRPYLAIFRPKLAIDRKTNLVFIKTKASSIDLAPTVIREREELLRLSFQDSRWLKVSQEPFKTLIVLEEIRVRREHLFEEGDEPDEAASLNEFDEQIAELREELQKNREDFTVETAAMDEKKWLDMCREVIRDKTLHKTLKEYQRAMTDGVRTHFDNGFHAERDANKFFS.

Residues 1–32 form a disordered region; it reads MKKVEILKTSRPSSAGGAARPSTASPTHGAPK.

Belongs to the SMG9 family.

In terms of biological role, involved in nonsense-mediated decay (NMD) of mRNAs containing premature stop codons. Probable component of kinase complex containing smg-1 and recruited to stalled ribosomes. The chain is Nonsense-mediated mRNA decay factor SMG9 (smg-9) from Caenorhabditis elegans.